Reading from the N-terminus, the 373-residue chain is 4-hydroxy-3-methylbut-2-en-1-yl diphosphate synthase (flavodoxin) (373 aa).

[4Fe-4S] cluster-binding residues include Cys-270, Cys-273, Cys-305, and Glu-312.

This sequence belongs to the IspG family. The cofactor is [4Fe-4S] cluster.

It carries out the reaction (2E)-4-hydroxy-3-methylbut-2-enyl diphosphate + oxidized [flavodoxin] + H2O + 2 H(+) = 2-C-methyl-D-erythritol 2,4-cyclic diphosphate + reduced [flavodoxin]. The protein operates within isoprenoid biosynthesis; isopentenyl diphosphate biosynthesis via DXP pathway; isopentenyl diphosphate from 1-deoxy-D-xylulose 5-phosphate: step 5/6. Functionally, converts 2C-methyl-D-erythritol 2,4-cyclodiphosphate (ME-2,4cPP) into 1-hydroxy-2-methyl-2-(E)-butenyl 4-diphosphate. The chain is 4-hydroxy-3-methylbut-2-en-1-yl diphosphate synthase (flavodoxin) from Proteus mirabilis (strain HI4320).